A 105-amino-acid polypeptide reads, in one-letter code: MKPTAADIISRATGGRAGNNIVDIIQAHNSPTEGDQLGQFVNRNRSLIKEFVLVVCGFLIFVMIVLFFMLLVVILLNQETITVQKQKYETTLLENYDIRNRNATI.

Belongs to the baculoviridae 11 kDa protein family.

This is an uncharacterized protein from Autographa californica nuclear polyhedrosis virus (AcMNPV).